The primary structure comprises 615 residues: Probable methylmalonyl-CoA mutase small subunit (615 aa).

It belongs to the methylmalonyl-CoA mutase family. In terms of assembly, heterodimer of an alpha and a beta chain. Adenosylcob(III)alamin serves as cofactor.

It carries out the reaction (R)-methylmalonyl-CoA = succinyl-CoA. It participates in metabolic intermediate metabolism; propanoyl-CoA degradation; succinyl-CoA from propanoyl-CoA: step 3/3. Catalyzes the isomerization of succinyl-CoA to methylmalonyl-CoA during synthesis of propionate from tricarboxylic acid-cycle intermediates. The chain is Probable methylmalonyl-CoA mutase small subunit (mutA) from Mycobacterium bovis (strain ATCC BAA-935 / AF2122/97).